The following is a 572-amino-acid chain: Proline--tRNA ligase (572 aa).

The protein belongs to the class-II aminoacyl-tRNA synthetase family. ProS type 1 subfamily. As to quaternary structure, homodimer.

It is found in the cytoplasm. It catalyses the reaction tRNA(Pro) + L-proline + ATP = L-prolyl-tRNA(Pro) + AMP + diphosphate. Its function is as follows. Catalyzes the attachment of proline to tRNA(Pro) in a two-step reaction: proline is first activated by ATP to form Pro-AMP and then transferred to the acceptor end of tRNA(Pro). As ProRS can inadvertently accommodate and process non-cognate amino acids such as alanine and cysteine, to avoid such errors it has two additional distinct editing activities against alanine. One activity is designated as 'pretransfer' editing and involves the tRNA(Pro)-independent hydrolysis of activated Ala-AMP. The other activity is designated 'posttransfer' editing and involves deacylation of mischarged Ala-tRNA(Pro). The misacylated Cys-tRNA(Pro) is not edited by ProRS. The protein is Proline--tRNA ligase of Shewanella amazonensis (strain ATCC BAA-1098 / SB2B).